The sequence spans 211 residues: Large ribosomal subunit protein uL3 (211 aa).

An N5-methylglutamine modification is found at Q150.

Belongs to the universal ribosomal protein uL3 family. In terms of assembly, part of the 50S ribosomal subunit. Forms a cluster with proteins L14 and L19. Post-translationally, methylated by PrmB.

In terms of biological role, one of the primary rRNA binding proteins, it binds directly near the 3'-end of the 23S rRNA, where it nucleates assembly of the 50S subunit. This is Large ribosomal subunit protein uL3 from Pseudomonas savastanoi pv. phaseolicola (strain 1448A / Race 6) (Pseudomonas syringae pv. phaseolicola (strain 1448A / Race 6)).